Consider the following 350-residue polypeptide: Galactokinase (350 aa).

Substrate is bound at residue 14–17; that stretch reads EHTD. ATP-binding positions include Ser-46 and 96-102; that span reads GAGLSSS. Ser-102 and Glu-134 together coordinate Mg(2+). Residue Asp-146 is the Proton acceptor of the active site. Position 196 (Tyr-196) interacts with substrate.

This sequence belongs to the GHMP kinase family. GalK subfamily.

It is found in the cytoplasm. The catalysed reaction is alpha-D-galactose + ATP = alpha-D-galactose 1-phosphate + ADP + H(+). It participates in carbohydrate metabolism; galactose metabolism. Its function is as follows. Catalyzes the transfer of the gamma-phosphate of ATP to D-galactose to form alpha-D-galactose-1-phosphate (Gal-1-P). The polypeptide is Galactokinase (Thermotoga neapolitana (strain ATCC 49049 / DSM 4359 / NBRC 107923 / NS-E)).